Reading from the N-terminus, the 62-residue chain is UPF0434 protein FTL_1400 (62 aa).

It belongs to the UPF0434 family.

The chain is UPF0434 protein FTL_1400 from Francisella tularensis subsp. holarctica (strain LVS).